The chain runs to 496 residues: Probable cytosol aminopeptidase (496 aa).

Residues Lys-262 and Asp-267 each coordinate Mn(2+). Lys-274 is an active-site residue. Mn(2+) contacts are provided by Asp-285, Asp-344, and Glu-346. Arg-348 is a catalytic residue.

Belongs to the peptidase M17 family. It depends on Mn(2+) as a cofactor.

The protein resides in the cytoplasm. The catalysed reaction is Release of an N-terminal amino acid, Xaa-|-Yaa-, in which Xaa is preferably Leu, but may be other amino acids including Pro although not Arg or Lys, and Yaa may be Pro. Amino acid amides and methyl esters are also readily hydrolyzed, but rates on arylamides are exceedingly low.. The enzyme catalyses Release of an N-terminal amino acid, preferentially leucine, but not glutamic or aspartic acids.. In terms of biological role, presumably involved in the processing and regular turnover of intracellular proteins. Catalyzes the removal of unsubstituted N-terminal amino acids from various peptides. This chain is Probable cytosol aminopeptidase, found in Rhizobium johnstonii (strain DSM 114642 / LMG 32736 / 3841) (Rhizobium leguminosarum bv. viciae).